Consider the following 374-residue polypeptide: C-X-C chemokine receptor type 5 (374 aa).

Topologically, residues Met-1–Pro-57 are extracellular. Asn-28 is a glycosylation site (N-linked (GlcNAc...) asparagine). The chain crosses the membrane as a helical span at residues Val-58–Leu-78. Over Glu-79–Thr-90 the chain is Cytoplasmic. A helical transmembrane segment spans residues Phe-91–Ala-111. Over Glu-112–Thr-126 the chain is Extracellular. Cys-124 and Cys-204 are joined by a disulfide. The helical transmembrane segment at Val-127 to Val-147 threads the bilayer. Over Asp-148–His-169 the chain is Cytoplasmic. Residues Ile-170–Ala-190 form a helical membrane-spanning segment. Residues Lys-191–Arg-221 lie on the Extracellular side of the membrane. N-linked (GlcNAc...) asparagine glycosylation is present at Asn-198. Residues Phe-222 to Gly-242 form a helical membrane-spanning segment. Topologically, residues Val-243 to Arg-261 are cytoplasmic. Residues Val-262–Phe-282 traverse the membrane as a helical segment. At Leu-283–Ile-306 the chain is on the extracellular side. A helical transmembrane segment spans residues Thr-307–Ala-327. The Cytoplasmic segment spans residues Gly-328 to Phe-374.

Belongs to the G-protein coupled receptor 1 family. In terms of tissue distribution, expressed in neuronal and lymphatic tissue.

The protein resides in the cell membrane. Its function is as follows. Cytokine receptor that binds to B-lymphocyte chemoattractant (BLC). Involved in B-cell migration into B-cell follicles of spleen and Peyer patches but not into those of mesenteric or peripheral lymph nodes. The chain is C-X-C chemokine receptor type 5 (Cxcr5) from Rattus norvegicus (Rat).